Reading from the N-terminus, the 242-residue chain is Purine nucleoside phosphorylase SCO2081 (242 aa).

Residues H68, C106, and H123 each contribute to the Zn(2+) site.

This sequence belongs to the purine nucleoside phosphorylase YfiH/LACC1 family. As to quaternary structure, homodimer. It depends on Cu(2+) as a cofactor. Zn(2+) serves as cofactor.

It catalyses the reaction adenosine + phosphate = alpha-D-ribose 1-phosphate + adenine. The catalysed reaction is S-methyl-5'-thioadenosine + phosphate = 5-(methylsulfanyl)-alpha-D-ribose 1-phosphate + adenine. The enzyme catalyses inosine + phosphate = alpha-D-ribose 1-phosphate + hypoxanthine. It carries out the reaction adenosine + H2O + H(+) = inosine + NH4(+). In terms of biological role, purine nucleoside enzyme that catalyzes the phosphorolysis of adenosine and inosine nucleosides, yielding D-ribose 1-phosphate and the respective free bases, adenine and hypoxanthine. Also catalyzes the phosphorolysis of S-methyl-5'-thioadenosine into adenine and S-methyl-5-thio-alpha-D-ribose 1-phosphate. Also has adenosine deaminase activity. In Streptomyces coelicolor (strain ATCC BAA-471 / A3(2) / M145), this protein is Purine nucleoside phosphorylase SCO2081.